The sequence spans 511 residues: Pancreatic alpha-amylase (511 aa).

The first 15 residues, 1–15 (MKLFLLLSAFGFCWA), serve as a signal peptide directing secretion. At glutamine 16 the chain carries Pyrrolidone carboxylic acid. 3 cysteine pairs are disulfide-bonded: cysteine 43-cysteine 101, cysteine 85-cysteine 130, and cysteine 156-cysteine 175. Ca(2+)-binding residues include asparagine 115, arginine 173, and aspartate 182. Arginine 210 is a chloride binding site. Aspartate 212 acts as the Nucleophile in catalysis. Residue histidine 216 coordinates Ca(2+). Catalysis depends on glutamate 248, which acts as the Proton donor. The chloride site is built by asparagine 313 and arginine 352. Cysteine 393 and cysteine 399 are disulfide-bonded. N-linked (GlcNAc...) asparagine glycosylation is present at asparagine 427. The cysteines at positions 465 and 477 are disulfide-linked.

This sequence belongs to the glycosyl hydrolase 13 family. Binds to the sea anemone inhibitor helianthamide and magnificamide. The cofactor is Ca(2+). Chloride serves as cofactor.

It is found in the secreted. Its subcellular location is the extracellular space. It carries out the reaction Endohydrolysis of (1-&gt;4)-alpha-D-glucosidic linkages in polysaccharides containing three or more (1-&gt;4)-alpha-linked D-glucose units.. The sequence is that of Pancreatic alpha-amylase (AMY2) from Sus scrofa (Pig).